A 161-amino-acid chain; its full sequence is uncharacterized protein (161 aa).

Disordered regions lie at residues 1–67 (MNSN…IQNF) and 80–147 (DSHQ…KKKQ). Low complexity predominate over residues 84–126 (NFNDNGFNNNNNNNNSNMNHNFSNQNNYNNNNNNNNNNNSNFN). Polar residues predominate over residues 135–147 (GTSSQVGNNKKKQ).

This is an uncharacterized protein from Dictyostelium discoideum (Social amoeba).